The chain runs to 346 residues: MAHHPRWTLSQVTELFEKPLLDLLFEAQQVHRQHFDPRQVQVSTLLSIKTGACPEDCKYCPQSSRYKTGLEAERLMEVEQVLESARKAKAAGSTRFCMGAAWKNPHERDMPYLEQMVQGVKAMGLEACMTLGTLSESQAQRLADAGLDYYNHNLDTSPEFYGNIITTRTYQERLDTLEKVRDAGIKVCSGGIVGLGETVKDRAGLLLQLANLPTPPESVPINMLVKVKGTPLADNDDVDAFDFIRTIAVARIMMPTSYVRLSAGREQMNEQTQAMCFMAGANSIFYGCKLLTTPNPEEDKDLQLFRKLGLNPQQTAVLAGDNEQQQRLEQALMTPDTDEYYNAAAL.

Residues 38-256 enclose the Radical SAM core domain; that stretch reads RQVQVSTLLS…IAVARIMMPT (219 aa). Residues C53, C57, and C60 each coordinate [4Fe-4S] cluster. Residues C97, C128, C188, and R260 each contribute to the [2Fe-2S] cluster site.

This sequence belongs to the radical SAM superfamily. Biotin synthase family. In terms of assembly, homodimer. The cofactor is [4Fe-4S] cluster. It depends on [2Fe-2S] cluster as a cofactor.

The catalysed reaction is (4R,5S)-dethiobiotin + (sulfur carrier)-SH + 2 reduced [2Fe-2S]-[ferredoxin] + 2 S-adenosyl-L-methionine = (sulfur carrier)-H + biotin + 2 5'-deoxyadenosine + 2 L-methionine + 2 oxidized [2Fe-2S]-[ferredoxin]. Its pathway is cofactor biosynthesis; biotin biosynthesis; biotin from 7,8-diaminononanoate: step 2/2. Its function is as follows. Catalyzes the conversion of dethiobiotin (DTB) to biotin by the insertion of a sulfur atom into dethiobiotin via a radical-based mechanism. This Escherichia fergusonii (strain ATCC 35469 / DSM 13698 / CCUG 18766 / IAM 14443 / JCM 21226 / LMG 7866 / NBRC 102419 / NCTC 12128 / CDC 0568-73) protein is Biotin synthase.